The following is a 251-amino-acid chain: Flap endonuclease Xni (251 aa).

Residue aspartate 104 participates in Mg(2+) binding. The 5'-3' exonuclease domain maps to 160–249; the sequence is VLPRQLPDYW…IDGNLQQLRL (90 aa). K(+) contacts are provided by leucine 171, alanine 172, proline 180, valine 182, and isoleucine 185. The interaction with DNA stretch occupies residues 184 to 189; sequence GIGPKS.

The protein belongs to the Xni family. Mg(2+) serves as cofactor. It depends on K(+) as a cofactor.

Its function is as follows. Has flap endonuclease activity. During DNA replication, flap endonucleases cleave the 5'-overhanging flap structure that is generated by displacement synthesis when DNA polymerase encounters the 5'-end of a downstream Okazaki fragment. The chain is Flap endonuclease Xni from Salmonella dublin (strain CT_02021853).